The following is a 574-amino-acid chain: Pyruvate kinase PKLR (574 aa).

Ser2, Ser19, Ser26, and Ser43 each carry phosphoserine. Arg116 serves as a coordination point for substrate. K(+) is bound by residues Asn118, Ser120, Asp156, and Thr157. 118 to 121 (NFSH) is a binding site for ATP. ATP contacts are provided by Arg163 and Lys250. Ser292 is modified (phosphoserine). Lys313 serves as a coordination point for substrate. Residue Glu315 coordinates Mn(2+). Residues Gly338, Asp339, and Thr371 each coordinate substrate. Asp339 is a Mn(2+) binding site. Residues 475–480 (TKTGRS), Trp525, Arg532, and 559–564 (RPGSGY) contribute to the beta-D-fructose 1,6-bisphosphate site.

The protein belongs to the pyruvate kinase family. In terms of assembly, homotetramer. Mg(2+) is required as a cofactor. The cofactor is Mn(2+). Requires K(+) as cofactor.

It carries out the reaction pyruvate + ATP = phosphoenolpyruvate + ADP + H(+). Its pathway is carbohydrate degradation; glycolysis; pyruvate from D-glyceraldehyde 3-phosphate: step 5/5. Its activity is regulated as follows. Allosterically activated by fructose 1,6-bisphosphate. In terms of biological role, pyruvate kinase that catalyzes the conversion of phosphoenolpyruvate to pyruvate with the synthesis of ATP, and which plays a key role in glycolysis. This chain is Pyruvate kinase PKLR (Pklr), found in Rattus norvegicus (Rat).